The chain runs to 300 residues: Urease accessory protein UreD (300 aa).

This sequence belongs to the UreD family. In terms of assembly, ureD, UreF and UreG form a complex that acts as a GTP-hydrolysis-dependent molecular chaperone, activating the urease apoprotein by helping to assemble the nickel containing metallocenter of UreC. The UreE protein probably delivers the nickel.

It is found in the cytoplasm. Its function is as follows. Required for maturation of urease via the functional incorporation of the urease nickel metallocenter. This chain is Urease accessory protein UreD, found in Prochlorococcus marinus (strain MIT 9312).